Consider the following 59-residue polypeptide: MAVQQNKKSPSKRGMHRSHDHLSAAPLAVEPTTGETHLRHHVSPNGYYRGRKVIKTKND.

Residues 1-59 (MAVQQNKKSPSKRGMHRSHDHLSAAPLAVEPTTGETHLRHHVSPNGYYRGRKVIKTKND) are disordered. Basic residues-rich tracts occupy residues 9-19 (SPSKRGMHRSH) and 49-59 (RGRKVIKTKND).

It belongs to the bacterial ribosomal protein bL32 family.

The chain is Large ribosomal subunit protein bL32 from Cupriavidus necator (strain ATCC 17699 / DSM 428 / KCTC 22496 / NCIMB 10442 / H16 / Stanier 337) (Ralstonia eutropha).